A 206-amino-acid chain; its full sequence is MFSPNFVLASASPARLKLLQTIGINPIVRPSHFDESKIVSDNPRELVEILAKSKAQTIAPDFPESLILGCDSLLVVRGEIYGKPNSPEEAIARWETMQGHHGTLYTGHTLIDTKQHKTLVRCGITEVYFASLDRPTIEAYVNSGEPLKCAGCFALEGKGGLFVDKIEGCHSNVIGLSLPLLRQILQELGYQIAQFWDSRSTPKNEY.

The active-site Proton acceptor is the Asp71.

It belongs to the Maf family. Requires a divalent metal cation as cofactor.

The protein resides in the cytoplasm. It carries out the reaction a ribonucleoside 5'-triphosphate + H2O = a ribonucleoside 5'-phosphate + diphosphate + H(+). The enzyme catalyses a 2'-deoxyribonucleoside 5'-triphosphate + H2O = a 2'-deoxyribonucleoside 5'-phosphate + diphosphate + H(+). Functionally, nucleoside triphosphate pyrophosphatase. May have a dual role in cell division arrest and in preventing the incorporation of modified nucleotides into cellular nucleic acids. The sequence is that of Nucleoside triphosphate pyrophosphatase from Rippkaea orientalis (strain PCC 8801 / RF-1) (Cyanothece sp. (strain PCC 8801)).